We begin with the raw amino-acid sequence, 1377 residues long: DNA-directed RNA polymerase subunit beta (1377 aa).

This sequence belongs to the RNA polymerase beta chain family. As to quaternary structure, the RNAP catalytic core consists of 2 alpha, 1 beta, 1 beta' and 1 omega subunit. When a sigma factor is associated with the core the holoenzyme is formed, which can initiate transcription.

It catalyses the reaction RNA(n) + a ribonucleoside 5'-triphosphate = RNA(n+1) + diphosphate. Functionally, DNA-dependent RNA polymerase catalyzes the transcription of DNA into RNA using the four ribonucleoside triphosphates as substrates. The chain is DNA-directed RNA polymerase subunit beta from Cereibacter sphaeroides (strain ATCC 17029 / ATH 2.4.9) (Rhodobacter sphaeroides).